A 342-amino-acid chain; its full sequence is Probable endoglucanase (342 aa).

The first 20 residues, 1–20 (MSVMAAMGGAQVLSSTGAFA), serve as a signal peptide directing secretion. Catalysis depends on Glu-57, which acts as the Proton donor. Asp-114 (nucleophile) is an active-site residue.

The protein belongs to the glycosyl hydrolase 8 (cellulase D) family.

The protein localises to the secreted. The catalysed reaction is Endohydrolysis of (1-&gt;4)-beta-D-glucosidic linkages in cellulose, lichenin and cereal beta-D-glucans.. In terms of biological role, enzyme capable of hydrolyzing carboxy-methyl-cellulose (CMC). The protein is Probable endoglucanase (cmcAX) of Novacetimonas hansenii (Komagataeibacter hansenii).